We begin with the raw amino-acid sequence, 251 residues long: Derlin-1 (251 aa).

Ser2 is modified (N-acetylserine). Over 2-15 (SDIGDWFRSIPAIT) the chain is Cytoplasmic. A helical transmembrane segment spans residues 16–31 (RYWFAATVAVPLVGKL). Topologically, residues 32-69 (GLISPAYLFLWPEAFLYRFQIWRPITATFYFPVGPGTG) are lumenal. Residues 70–89 (FLYLVNLYFLYHYSTRLETG) form a helical membrane-spanning segment. At 90 to 94 (AFDGR) the chain is on the cytoplasmic side. The chain crosses the membrane as a helical span at residues 95 to 115 (PADYLFMLLFNWICIVITGLA). Topologically, residues 116–122 (MDMQLLM) are lumenal. Residues 123–137 (IPLIMSVLYVWAQLN) form a helical membrane-spanning segment. Residues 138-154 (RDMIVSFWFGTRFKACY) are Cytoplasmic-facing. The helical transmembrane segment at 155 to 166 (LPWVILGFNYII) threads the bilayer. At 167–170 (GGSV) the chain is on the lumenal side. The helical transmembrane segment at 171 to 189 (INELIGNLVGHLYFFLMFR) threads the bilayer. Residues 190 to 251 (YPMDLGGRNF…WGQGFRLGDQ (62 aa)) are Cytoplasmic-facing. Ser201 is subject to Phosphoserine. Residue Thr202 is modified to Phosphothreonine. Phosphoserine is present on Ser226. The segment at 229 to 251 (RAADQNGGGGRHNWGQGFRLGDQ) is disordered. An SHP-box motif is present at residues 241–248 (NWGQGFRL).

Belongs to the derlin family. As to quaternary structure, homotetramer. The four subunits of the tetramer are arranged in a twofold symmetry. Forms homo- and heterooligomers with DERL2 and DERL3; binding to DERL3 is poorer than that between DERL2 and DERL3. Interacts (via SHP-box motif) with VCP. Interacts with AMFR, SELENOS, SEL1L, SELENOK and SYVN1, as well as with SEL1L-SYVN1 and VCP-SELENOS protein complexes; this interaction is weaker than that observed between DERL2 and these complexes. Interacts with NGLY1 and YOD1. Does not bind to EDEM1. Interacts with DNAJB9. Interacts with RNF103. Interacts with HM13. Interacts with XBP1 isoform 1 (via luminal/ectodomain domain); the interaction obviates the need for ectodomain shedding prior HM13/SPP-mediated XBP1 isoform 1 cleavage. Interacts with the signal recognition particle/SRP and the SRP receptor; in the process of endoplasmic reticulum stress-induced pre-emptive quality control. May interact with UBXN6. Interacts with ZFAND2B; probably through VCP. Interacts with CCDC47. Interacts with C18orf32. May interact with TRAM1. Forms a complex with SVIP and VCP/p97.

Its subcellular location is the endoplasmic reticulum membrane. In terms of biological role, functional component of endoplasmic reticulum-associated degradation (ERAD) for misfolded lumenal proteins. Forms homotetramers which encircle a large channel traversing the endoplasmic reticulum (ER) membrane. This allows the retrotranslocation of misfolded proteins from the ER into the cytosol where they are ubiquitinated and degraded by the proteasome. The channel has a lateral gate within the membrane which provides direct access to membrane proteins with no need to reenter the ER lumen first. May mediate the interaction between VCP and the misfolded protein. Also involved in endoplasmic reticulum stress-induced pre-emptive quality control, a mechanism that selectively attenuates the translocation of newly synthesized proteins into the endoplasmic reticulum and reroutes them to the cytosol for proteasomal degradation. By controlling the steady-state expression of the IGF1R receptor, indirectly regulates the insulin-like growth factor receptor signaling pathway. The chain is Derlin-1 from Pongo abelii (Sumatran orangutan).